The sequence spans 111 residues: Aspartate 1-decarboxylase (111 aa).

The active-site Schiff-base intermediate with substrate; via pyruvic acid is the Ser25. Ser25 carries the pyruvic acid (Ser) modification. Thr57 serves as a coordination point for substrate. Catalysis depends on Tyr58, which acts as the Proton donor. 73-75 contacts substrate; it reads GPA.

This sequence belongs to the PanD family. In terms of assembly, heterooctamer of four alpha and four beta subunits. Requires pyruvate as cofactor. Post-translationally, is synthesized initially as an inactive proenzyme, which is activated by self-cleavage at a specific serine bond to produce a beta-subunit with a hydroxyl group at its C-terminus and an alpha-subunit with a pyruvoyl group at its N-terminus.

It is found in the cytoplasm. The enzyme catalyses L-aspartate + H(+) = beta-alanine + CO2. It participates in cofactor biosynthesis; (R)-pantothenate biosynthesis; beta-alanine from L-aspartate: step 1/1. Functionally, catalyzes the pyruvoyl-dependent decarboxylation of aspartate to produce beta-alanine. The protein is Aspartate 1-decarboxylase of Francisella tularensis subsp. novicida (strain U112).